The primary structure comprises 415 residues: uncharacterized protein (415 aa).

3 disordered regions span residues 39–77 (FLPP…RPIH), 220–247 (AEDK…HPLT), and 346–415 (VTLN…NGSK). 3 stretches are compositionally biased toward basic and acidic residues: residues 220–238 (AEDK…ESKN), 365–380 (DVNK…DKHM), and 400–415 (SKTE…NGSK).

This is an uncharacterized protein from Rattus norvegicus (Rat).